Reading from the N-terminus, the 1405-residue chain is DNA-directed RNA polymerase subunit beta' (1405 aa).

Zn(2+) is bound by residues C70, C72, C85, and C88. 3 residues coordinate Mg(2+): D460, D462, and D464. C814, C888, C895, and C898 together coordinate Zn(2+).

This sequence belongs to the RNA polymerase beta' chain family. As to quaternary structure, the RNAP catalytic core consists of 2 alpha, 1 beta, 1 beta' and 1 omega subunit. When a sigma factor is associated with the core the holoenzyme is formed, which can initiate transcription. Requires Mg(2+) as cofactor. It depends on Zn(2+) as a cofactor.

It carries out the reaction RNA(n) + a ribonucleoside 5'-triphosphate = RNA(n+1) + diphosphate. DNA-dependent RNA polymerase catalyzes the transcription of DNA into RNA using the four ribonucleoside triphosphates as substrates. This Wigglesworthia glossinidia brevipalpis protein is DNA-directed RNA polymerase subunit beta'.